The sequence spans 202 residues: Glycerol-3-phosphate acyltransferase (202 aa).

Transmembrane regions (helical) follow at residues M2–I22, F54–L74, F85–Y105, V120–L140, K141–S161, and L162–I182.

Belongs to the PlsY family. Probably interacts with PlsX.

Its subcellular location is the cell membrane. It catalyses the reaction an acyl phosphate + sn-glycerol 3-phosphate = a 1-acyl-sn-glycero-3-phosphate + phosphate. It functions in the pathway lipid metabolism; phospholipid metabolism. In terms of biological role, catalyzes the transfer of an acyl group from acyl-phosphate (acyl-PO(4)) to glycerol-3-phosphate (G3P) to form lysophosphatidic acid (LPA). This enzyme utilizes acyl-phosphate as fatty acyl donor, but not acyl-CoA or acyl-ACP. The sequence is that of Glycerol-3-phosphate acyltransferase from Staphylococcus aureus (strain USA300).